A 143-amino-acid chain; its full sequence is Alpha-amylase/trypsin inhibitor CM16 (143 aa).

Residues 1 to 24 form the signal peptide; it reads MASKSNCVLLLAAVLVSIFAAVAA.

The protein belongs to the protease inhibitor I6 (cereal trypsin/alpha-amylase inhibitor) family. In terms of assembly, subunit of the tetrameric inhibitor. Five disulfide bonds, which are essential for the inhibitor activity, are probably present. As to expression, developing endosperm.

It localises to the secreted. Alpha-amylase/trypsin inhibitor. It could be involved in insect defense mechanisms. The chain is Alpha-amylase/trypsin inhibitor CM16 from Triticum aestivum (Wheat).